We begin with the raw amino-acid sequence, 278 residues long: ABC transporter I family member 11, chloroplastic (278 aa).

A chloroplast-targeting transit peptide spans 1–49 (MAVSTFSSPTPVFGIAEPPASFSSTAIGWKQPLRFRRTKKPRVISCDYS). The ABC transporter domain occupies 51–278 (IEVRDVCYRP…GVLVAERPPL (228 aa)). 85-92 (GKSGSGKT) is a binding site for ATP.

This sequence belongs to the ABC transporter superfamily. ABCI family.

The protein localises to the plastid. It localises to the chloroplast. This chain is ABC transporter I family member 11, chloroplastic (ABCI11), found in Arabidopsis thaliana (Mouse-ear cress).